The sequence spans 346 residues: DNA polymerase IV 2 (346 aa).

Positions 9–191 (ILHVDLDQFL…RTVEALWGVG (183 aa)) constitute a UmuC domain. Mg(2+) is bound by residues aspartate 13 and aspartate 111. Residue glutamate 112 is part of the active site.

The protein belongs to the DNA polymerase type-Y family. In terms of assembly, monomer. The cofactor is Mg(2+).

The protein localises to the cytoplasm. The catalysed reaction is DNA(n) + a 2'-deoxyribonucleoside 5'-triphosphate = DNA(n+1) + diphosphate. In terms of biological role, poorly processive, error-prone DNA polymerase involved in untargeted mutagenesis. Copies undamaged DNA at stalled replication forks, which arise in vivo from mismatched or misaligned primer ends. These misaligned primers can be extended by PolIV. Exhibits no 3'-5' exonuclease (proofreading) activity. May be involved in translesional synthesis, in conjunction with the beta clamp from PolIII. The polypeptide is DNA polymerase IV 2 (dinB2) (Mycobacterium bovis (strain ATCC BAA-935 / AF2122/97)).